A 469-amino-acid polypeptide reads, in one-letter code: Tetratricopeptide repeat protein 38 (469 aa).

3 TPR repeats span residues Arg107–Asp140, Ser179–Asp212, and Cys251–Ala284.

The protein belongs to the TTC38 family.

The chain is Tetratricopeptide repeat protein 38 (ttc38) from Xenopus laevis (African clawed frog).